A 430-amino-acid chain; its full sequence is Glutamate-1-semialdehyde 2,1-aminomutase (430 aa).

At lysine 268 the chain carries N6-(pyridoxal phosphate)lysine.

The protein belongs to the class-III pyridoxal-phosphate-dependent aminotransferase family. HemL subfamily. Homodimer. The cofactor is pyridoxal 5'-phosphate.

The protein resides in the cytoplasm. It carries out the reaction (S)-4-amino-5-oxopentanoate = 5-aminolevulinate. The protein operates within porphyrin-containing compound metabolism; protoporphyrin-IX biosynthesis; 5-aminolevulinate from L-glutamyl-tRNA(Glu): step 2/2. The chain is Glutamate-1-semialdehyde 2,1-aminomutase (hemL) from Bacillus subtilis (strain 168).